A 309-amino-acid polypeptide reads, in one-letter code: Ribose-phosphate pyrophosphokinase (309 aa).

ATP-binding positions include 37-39 (DGE) and 96-97 (RQ). Residues H130 and D169 each contribute to the Mg(2+) site. K192 is an active-site residue. D-ribose 5-phosphate contacts are provided by residues R194, D218, and 222-226 (DTAGT).

The protein belongs to the ribose-phosphate pyrophosphokinase family. Class I subfamily. As to quaternary structure, homohexamer. Mg(2+) serves as cofactor.

The protein localises to the cytoplasm. The catalysed reaction is D-ribose 5-phosphate + ATP = 5-phospho-alpha-D-ribose 1-diphosphate + AMP + H(+). The protein operates within metabolic intermediate biosynthesis; 5-phospho-alpha-D-ribose 1-diphosphate biosynthesis; 5-phospho-alpha-D-ribose 1-diphosphate from D-ribose 5-phosphate (route I): step 1/1. Involved in the biosynthesis of the central metabolite phospho-alpha-D-ribosyl-1-pyrophosphate (PRPP) via the transfer of pyrophosphoryl group from ATP to 1-hydroxyl of ribose-5-phosphate (Rib-5-P). This chain is Ribose-phosphate pyrophosphokinase, found in Wolinella succinogenes (strain ATCC 29543 / DSM 1740 / CCUG 13145 / JCM 31913 / LMG 7466 / NCTC 11488 / FDC 602W) (Vibrio succinogenes).